The following is a 156-amino-acid chain: U4/U6.U5 small nuclear ribonucleoprotein 27 kDa protein (156 aa).

The tract at residues 1-98 is disordered; that stretch reads MGRSRSRSPE…IAAEDLEGKT (98 aa). The span at 13–59 shows a compositional bias: basic residues; that stretch reads RERRRSRSASRERERRRRERSRSRERRRSRSRSPHRRRSRSPRRHRS. The segment covering 66–98 has biased composition (basic and acidic residues); it reads RLKDRRDDDKKDSKESKGAKERQIAAEDLEGKT.

The protein belongs to the SNUT3 family. In terms of assembly, part of a tri-snRNP complex.

The protein resides in the nucleus. Functionally, may play a role in mRNA splicing. The polypeptide is U4/U6.U5 small nuclear ribonucleoprotein 27 kDa protein (snrnp27) (Xenopus tropicalis (Western clawed frog)).